We begin with the raw amino-acid sequence, 699 residues long: Transketolase (699 aa).

H45 provides a ligand contact to substrate. Thiamine diphosphate contacts are provided by residues T48, H85, and 133–135; that span reads GPL. Mg(2+) is bound at residue D177. Residues G178 and N207 each coordinate thiamine diphosphate. Mg(2+) is bound by residues N207 and I209. Substrate is bound by residues H283, R378, and S405. H283 contacts thiamine diphosphate. The active-site Proton donor is E441. A thiamine diphosphate-binding site is contributed by F467. Substrate contacts are provided by H491, D499, and R552.

Belongs to the transketolase family. As to quaternary structure, homodimer. Requires Mg(2+) as cofactor. It depends on Ca(2+) as a cofactor. Mn(2+) serves as cofactor. Co(2+) is required as a cofactor. The cofactor is thiamine diphosphate.

The enzyme catalyses D-sedoheptulose 7-phosphate + D-glyceraldehyde 3-phosphate = aldehydo-D-ribose 5-phosphate + D-xylulose 5-phosphate. Its function is as follows. Catalyzes the transfer of a two-carbon ketol group from a ketose donor to an aldose acceptor, via a covalent intermediate with the cofactor thiamine pyrophosphate. This Mycobacterium leprae (strain TN) protein is Transketolase (tkt).